A 179-amino-acid chain; its full sequence is ATP-dependent protease subunit HslV (179 aa).

Residue Thr6 is part of the active site. Na(+)-binding residues include Ser164, Cys167, and Thr170.

Belongs to the peptidase T1B family. HslV subfamily. As to quaternary structure, a double ring-shaped homohexamer of HslV is capped on each side by a ring-shaped HslU homohexamer. The assembly of the HslU/HslV complex is dependent on binding of ATP.

It localises to the cytoplasm. The enzyme catalyses ATP-dependent cleavage of peptide bonds with broad specificity.. Allosterically activated by HslU binding. Functionally, protease subunit of a proteasome-like degradation complex believed to be a general protein degrading machinery. The sequence is that of ATP-dependent protease subunit HslV from Listeria innocua serovar 6a (strain ATCC BAA-680 / CLIP 11262).